Consider the following 319-residue polypeptide: Urease accessory protein UreD (319 aa).

The interval 298–319 is disordered; sequence QEQPLPPSSFKTNTAVPAVRTH.

The protein belongs to the UreD family. UreD, UreF and UreG form a complex that acts as a GTP-hydrolysis-dependent molecular chaperone, activating the urease apoprotein by helping to assemble the nickel containing metallocenter of UreC. The UreE protein probably delivers the nickel.

It is found in the cytoplasm. Required for maturation of urease via the functional incorporation of the urease nickel metallocenter. The chain is Urease accessory protein UreD from Synechococcus sp. (strain WH7805).